The primary structure comprises 937 residues: Protein translocase subunit SecA (937 aa).

ATP is bound by residues Gln87, 105-109 (GEGKT), and Asp494. Residues 881–937 (RGLNYIGPDEGGRASVHSDAEEYGGGTPAAAGTRRERREAARAEGKGKRGPKSRRKH) are disordered. 2 stretches are compositionally biased toward basic and acidic residues: residues 890 to 900 (EGGRASVHSDA) and 913 to 927 (TRRE…EGKG). The span at 928 to 937 (KRGPKSRRKH) shows a compositional bias: basic residues.

This sequence belongs to the SecA family. Monomer and homodimer. Part of the essential Sec protein translocation apparatus which comprises SecA, SecYEG and auxiliary proteins SecDF. Other proteins may also be involved.

The protein localises to the cell membrane. Its subcellular location is the cytoplasm. The enzyme catalyses ATP + H2O + cellular proteinSide 1 = ADP + phosphate + cellular proteinSide 2.. In terms of biological role, part of the Sec protein translocase complex. Interacts with the SecYEG preprotein conducting channel. Has a central role in coupling the hydrolysis of ATP to the transfer of proteins into and across the cell membrane, serving as an ATP-driven molecular motor driving the stepwise translocation of polypeptide chains across the membrane. The chain is Protein translocase subunit SecA from Nocardia farcinica (strain IFM 10152).